A 424-amino-acid chain; its full sequence is Tyrosine--tRNA ligase (424 aa).

Residue Tyr-37 coordinates L-tyrosine. A 'HIGH' region motif is present at residues 42–51; it reads PTADSLHIGS. L-tyrosine contacts are provided by Tyr-174 and Gln-178. Positions 234–238 match the 'KMSKS' region motif; that stretch reads KFGKT. Position 237 (Lys-237) interacts with ATP. An S4 RNA-binding domain is found at 357–422; that stretch reads SGLIDALAAG…RGKKLYALVD (66 aa).

It belongs to the class-I aminoacyl-tRNA synthetase family. TyrS type 1 subfamily. Homodimer.

It is found in the cytoplasm. It catalyses the reaction tRNA(Tyr) + L-tyrosine + ATP = L-tyrosyl-tRNA(Tyr) + AMP + diphosphate + H(+). Catalyzes the attachment of tyrosine to tRNA(Tyr) in a two-step reaction: tyrosine is first activated by ATP to form Tyr-AMP and then transferred to the acceptor end of tRNA(Tyr). The protein is Tyrosine--tRNA ligase of Chromobacterium violaceum (strain ATCC 12472 / DSM 30191 / JCM 1249 / CCUG 213 / NBRC 12614 / NCIMB 9131 / NCTC 9757 / MK).